The primary structure comprises 209 residues: uncharacterized protein (209 aa).

Disordered regions lie at residues 1–80 (MFVR…PPVE) and 164–197 (LPAGGAGEQEKEPVSRGSSRSSCSQRRPPPPGME). Low complexity predominate over residues 178–189 (SRGSSRSSCSQR).

This is an uncharacterized protein from Homo sapiens (Human).